The sequence spans 174 residues: Small ribosomal subunit protein uS5 (174 aa).

The S5 DRBM domain occupies 16–79 (FSELIVSVRR…NAAKKNMIRV (64 aa)).

This sequence belongs to the universal ribosomal protein uS5 family. In terms of assembly, part of the 30S ribosomal subunit. Contacts proteins S4 and S8.

Its function is as follows. With S4 and S12 plays an important role in translational accuracy. Functionally, located at the back of the 30S subunit body where it stabilizes the conformation of the head with respect to the body. The chain is Small ribosomal subunit protein uS5 from Ehrlichia canis (strain Jake).